A 316-amino-acid polypeptide reads, in one-letter code: Phosphate acyltransferase (316 aa).

Belongs to the PlsX family. In terms of assembly, homodimer. Probably interacts with PlsY.

Its subcellular location is the cytoplasm. The catalysed reaction is a fatty acyl-[ACP] + phosphate = an acyl phosphate + holo-[ACP]. Its pathway is lipid metabolism; phospholipid metabolism. Functionally, catalyzes the reversible formation of acyl-phosphate (acyl-PO(4)) from acyl-[acyl-carrier-protein] (acyl-ACP). This enzyme utilizes acyl-ACP as fatty acyl donor, but not acyl-CoA. The sequence is that of Phosphate acyltransferase from Chlamydia caviae (strain ATCC VR-813 / DSM 19441 / 03DC25 / GPIC) (Chlamydophila caviae).